We begin with the raw amino-acid sequence, 183 residues long: Adenine phosphoribosyltransferase (183 aa).

Belongs to the purine/pyrimidine phosphoribosyltransferase family. Homodimer.

The protein localises to the cytoplasm. The enzyme catalyses AMP + diphosphate = 5-phospho-alpha-D-ribose 1-diphosphate + adenine. It functions in the pathway purine metabolism; AMP biosynthesis via salvage pathway; AMP from adenine: step 1/1. Catalyzes a salvage reaction resulting in the formation of AMP, that is energically less costly than de novo synthesis. In Escherichia coli O157:H7, this protein is Adenine phosphoribosyltransferase.